Here is a 460-residue protein sequence, read N- to C-terminus: Antizyme inhibitor 2 (460 aa).

The interval 117–140 (QIAQIKYAAKHGIQLLSFDNEMEL) is necessary for polyamine uptake stimulation.

Belongs to the Orn/Lys/Arg decarboxylase class-II family. ODC antizyme inhibitor subfamily. Monomer. Interacts with OAZ1, OAZ2 and OAZ3; this interaction disrupts the interaction between the antizyme and ODC1. Does not form a heterodimer with ODC1. In terms of processing, ubiquitinated, leading to its proteasomal degradation; a process that is reduced in presence of antizymes. May also be degraded through the lysosomal degradative pathway in a proteasomal-independent manner. Expressed in the neocortex, thalamus, hippocampus, cerebellum, medulla oblongata, gray and white matter. Expressed in neurons, oligodendrocytes, basket, Purkinje and pyramidal cells. Expressed in spermatocytes and Leydig cells of the testis. Expressed in luteal theca cells lining corpus luteum cysts and in hilus cells of the ovary. Expressed in primary and neoplastic mast cells (MC) (at protein level). Highly expressed in brain. Also expressed in testis.

The protein resides in the nucleus. It localises to the cytoplasm. Its subcellular location is the perinuclear region. The protein localises to the membrane. It is found in the cytoplasmic vesicle. The protein resides in the endoplasmic reticulum-Golgi intermediate compartment. It localises to the golgi apparatus. Its subcellular location is the cis-Golgi network. The protein localises to the trans-Golgi network. It is found in the cytoplasmic granule. The protein resides in the cell projection. It localises to the axon. Its subcellular location is the dendrite. The protein localises to the perikaryon. Antizyme inhibitor (AZI) protein that positively regulates ornithine decarboxylase (ODC) activity and polyamine uptake. AZI is an enzymatically inactive ODC homolog that counteracts the negative effect of ODC antizymes (AZs) OAZ1, OAZ2 and OAZ3 on ODC activity by competing with ODC for antizyme-binding. Inhibits antizyme-dependent ODC degradation and releases ODC monomers from their inactive complex with antizymes, leading to formation of the catalytically active ODC homodimer and restoring polyamine production. Participates in the morphological integrity of the trans-Golgi network (TGN) and functions as a regulator of intracellular secretory vesicle trafficking. This is Antizyme inhibitor 2 (AZIN2) from Homo sapiens (Human).